We begin with the raw amino-acid sequence, 497 residues long: Serine/threonine-protein phosphatase 2A 56 kDa regulatory subunit beta isoform (497 aa).

The span at methionine 1 to leucine 19 shows a compositional bias: low complexity. Disordered stretches follow at residues methionine 1–asparagine 55 and glutamine 473–serine 497. A phosphoserine mark is found at serine 32, serine 35, serine 44, serine 46, serine 47, and serine 48. Over residues arginine 34–histidine 45 the composition is skewed to basic residues.

This sequence belongs to the phosphatase 2A regulatory subunit B56 family. In terms of assembly, component of the serine/threonine-protein phosphatase 2A complex (PP2A). This complex consists of a common heterodimeric core enzyme, composed of a 36 kDa catalytic subunit (subunit C) and a 65 kDa constant scaffold subunit (PR65 or subunit A), that associates with a variety of regulatory subunits. Proteins that associate with the core dimer include three families of regulatory subunits B (the R2/B/PR55/B55, R3/B''/PR72/PR130/PR59 and R5/B'/B56 families), the 48 kDa variable regulatory subunit, viral proteins, and cell signaling molecules. Interacts with SGO1. Interacts with AKT1. In terms of processing, ubiquitinated by CUL3-KLHL15 complex; this modification leads to proteasomal degradation. As to expression, widely expressed at the mRNA level, with highest levels in cerebellum and lung.

It localises to the cytoplasm. As the regulatory component of the serine/threonine-protein phosphatase 2A (PP2A) holoenzyme, modulates substrate specificity, subcellular localization, and responsiveness to phosphorylation. The phosphorylated form mediates the interaction between PP2A and AKT1, leading to AKT1 dephosphorylation. This is Serine/threonine-protein phosphatase 2A 56 kDa regulatory subunit beta isoform (Ppp2r5b) from Rattus norvegicus (Rat).